Here is a 329-residue protein sequence, read N- to C-terminus: Palmitoyltransferase pfa3 (329 aa).

Transmembrane regions (helical) follow at residues Val-14–Val-34, Val-49–Leu-69, Phe-141–Phe-161, Ala-177–Met-197, and Ile-243–Val-263. One can recognise a DHHC domain in the interval Arg-97 to Phe-147.

Belongs to the DHHC palmitoyltransferase family. PFA3 subfamily. Post-translationally, autopalmitoylated.

It is found in the vacuole membrane. It localises to the golgi apparatus membrane. The catalysed reaction is L-cysteinyl-[protein] + hexadecanoyl-CoA = S-hexadecanoyl-L-cysteinyl-[protein] + CoA. Its function is as follows. Palmitoyltransferase specific for VAC8. Palmitoylates VAC8 at one or more of its N-terminal cysteine residues, which is required for its proper membrane localization. The chain is Palmitoyltransferase pfa3 (pfa3) from Schizosaccharomyces pombe (strain 972 / ATCC 24843) (Fission yeast).